Reading from the N-terminus, the 432-residue chain is Enolase (432 aa).

Gln-167 serves as a coordination point for (2R)-2-phosphoglycerate. The active-site Proton donor is Glu-209. The Mg(2+) site is built by Asp-246, Glu-291, and Asp-318. Lys-343, Arg-372, Ser-373, and Lys-394 together coordinate (2R)-2-phosphoglycerate. The active-site Proton acceptor is Lys-343.

The protein belongs to the enolase family. As to quaternary structure, component of the RNA degradosome, a multiprotein complex involved in RNA processing and mRNA degradation. Mg(2+) is required as a cofactor.

It is found in the cytoplasm. It localises to the secreted. Its subcellular location is the cell surface. It carries out the reaction (2R)-2-phosphoglycerate = phosphoenolpyruvate + H2O. It functions in the pathway carbohydrate degradation; glycolysis; pyruvate from D-glyceraldehyde 3-phosphate: step 4/5. Its function is as follows. Catalyzes the reversible conversion of 2-phosphoglycerate (2-PG) into phosphoenolpyruvate (PEP). It is essential for the degradation of carbohydrates via glycolysis. This Pseudoalteromonas translucida (strain TAC 125) protein is Enolase.